We begin with the raw amino-acid sequence, 747 residues long: NAD-dependent protein deacetylase sirtuin-1 (747 aa).

The segment at 1-135 (MADEAALALQ…DDEGEEEEEA (135 aa)) is disordered. The residue at position 2 (alanine 2) is an N-acetylalanine. The tract at residues 2–139 (ADEAALALQP…EEEEEAAAAA (138 aa)) is interaction with CLOCK. The segment at 2-268 (ADEAALALQP…LTGAGVSVSC (267 aa)) is interaction with H1-4. Serine 14 and serine 26 each carry phosphoserine. Serine 27 is modified (phosphoserine; by MAPK8). The Nuclear localization signal motif lies at 32-39 (PLRKRPRR). Residue serine 47 is modified to Phosphoserine; by MAPK8. Over residues 61-100 (PAAARGCPGAAAAALWREAEAEAAAAGGEQEAQATAAAGE) the composition is skewed to low complexity. Residues 120-135 (LYDEDDDDEGEEEEEA) are compositionally biased toward acidic residues. The short motif at 138 to 145 (AAIGYRDN) is the Nuclear export signal element. Residues 143–541 (RDNLLFGDEI…LHVSEDSSSP (399 aa)) form an interaction with CCAR2 region. Phosphoserine is present on residues serine 159, serine 162, serine 172, and serine 173. A Nuclear localization signal motif is present at residues 223–230 (IVINILSE). Positions 236–496 (KRKDINTIED…NELCHRLGGE (261 aa)) constitute a Deacetylase sirtuin-type domain. Lysine 238 bears the N6-acetyllysine mark. Residues 256–259 (IIVL) form a required for interaction with the sumoylated form of CCAR2 region. NAD(+) contacts are provided by residues 261 to 280 (GAGVSVSCGIPDFRSRDGIY) and 345 to 348 (QNID). Histidine 363 (proton acceptor) is an active-site residue. Residues cysteine 371 and cysteine 374 each contribute to the Zn(2+) site. Lysine 377 is modified (N6-acetyllysine). Residues cysteine 395 and cysteine 398 each contribute to the Zn(2+) site. Residues cysteine 395 and cysteine 398 each carry the S-nitrosocysteine modification. Positions 425 to 431 (AMKYDKD) match the Nuclear export signal motif. Lysine 430 is modified (N6-acetyllysine). NAD(+) contacts are provided by residues 440–442 (GSS), 465–467 (NRE), and cysteine 482. Lysine 513 is modified (N6-acetyllysine). 2 disordered regions span residues 523-549 (YLSELPPTPLHVSEDSSSPERTSPPDS) and 562-587 (SNDDLDVSESKGCMEEKPQEVQTSRN). Threonine 530 is subject to Phosphothreonine; by DYRK1A, DYRK3 and MAPK8. Serine 535 carries the phosphoserine modification. The segment covering 537–549 (DSSSPERTSPPDS) has biased composition (polar residues). A phosphorylated at one of three serine residues region spans residues 538-540 (SSS). Threonine 544 is subject to Phosphothreonine. Serine 545 carries the post-translational modification Phosphoserine. A compositionally biased stretch (basic and acidic residues) spans 569–580 (SESKGCMEEKPQ). Lysine 610 is subject to N6-acetyllysine. Phosphoserine; by CaMK2 occurs at positions 659 and 661. The segment at 663 to 726 (DDVLSSSSCG…FGTDGDDQEA (64 aa)) is disordered. Residues 666 to 677 (LSSSSCGSNSDS) show a composition bias toward low complexity. The segment covering 687–707 (EPMEDESEIEEFYNGLEDEPD) has biased composition (acidic residues). A Phosphothreonine modification is found at threonine 719. Residue serine 747 is modified to Phosphoserine.

Belongs to the sirtuin family. Class I subfamily. In terms of assembly, interacts with XBP1 isoform 2. Found in a complex with PCAF and MYOD1. Interacts with FOXO1; the interaction deacetylates FOXO1, resulting in its nuclear retention and promotion of its transcriptional activity Component of the eNoSC complex, composed of SIRT1, SUV39H1 and RRP8. Interacts with HES1, HEY2 and PML. Interacts with RPS19BP1/AROS. Interacts with CCAR2 (via N-terminus); the interaction disrupts the interaction between SIRT1 and p53/TP53. Interacts with SETD7; the interaction induces the dissociation of SIRT1 from p53/TP53 and increases p53/TP53 activity. Interacts with MYCN, NR1I2, CREBZF, TSC2, TLE1, FOS, JUN, NR0B2, PPARG, NCOR, IRS1, IRS2 and NMNAT1. Interacts with HNF1A; the interaction occurs under nutrient restriction. Interacts with SUZ12; the interaction mediates the association with the PRC4 histone methylation complex which is specific as an association with PCR2 and PCR3 complex variants is not found. Interacts with BCL6; leads to a epigenetic repression of specific target genes. Interacts with CLOCK, BMAL1 and PER2. Interacts with PPARA; the interaction seems to be modulated by NAD(+) levels. Interacts with NR1H3 and this interaction is inhibited in the presence of CCAR2. Interacts with CHEK2. Interacts with p53/TP53. Exhibits a preferential interaction with sumoylated CCAR2 over its unmodified form. Interacts with PACS2. Interacts with SIRT7. Interacts with PUS7. Interacts with TULP3. Interacts with MORN3; the interaction enhances the ubiquitination of p53/TP53. (Microbial infection) Interacts with HIV-1 Tat. Zn(2+) serves as cofactor. Post-translationally, methylated on multiple lysine residues; methylation is enhanced after DNA damage and is dispensable for deacetylase activity toward p53/TP53. In terms of processing, phosphorylated. Phosphorylated by STK4/MST1, resulting in inhibition of SIRT1-mediated p53/TP53 deacetylation. Phosphorylation by MAPK8/JNK1 at Ser-27, Ser-47, and Thr-530 leads to increased nuclear localization and enzymatic activity. Phosphorylation at Thr-530 by DYRK1A and DYRK3 activates deacetylase activity and promotes cell survival. Phosphorylation by mammalian target of rapamycin complex 1 (mTORC1) at Ser-47 inhibits deacetylation activity. Phosphorylated by CaMK2, leading to increased p53/TP53 and NF-kappa-B p65/RELA deacetylation activity. Phosphorylation at Ser-27 implicating MAPK9 is linked to protein stability. There is some ambiguity for some phosphosites: Ser-159/Ser-162 and Thr-544/Ser-545. Proteolytically cleaved by cathepsin B upon TNF-alpha treatment to yield catalytic inactive but stable SirtT1 75 kDa fragment (75SirT1). Post-translationally, S-nitrosylated by GAPDH, leading to inhibit the NAD-dependent protein deacetylase activity. In terms of processing, acetylated at various Lys residues. Deacetylated via an autocatalytic mechanism. Autodeacetylation at Lys-238 promotes its protein deacetylase activity. Ubiquitinated; leading to degradation. Deubiquitinated by USP22; leading to stabilization. As to expression, widely expressed.

The protein localises to the nucleus. Its subcellular location is the PML body. It is found in the cytoplasm. The protein resides in the mitochondrion. The catalysed reaction is N(6)-acetyl-L-lysyl-[protein] + NAD(+) + H2O = 2''-O-acetyl-ADP-D-ribose + nicotinamide + L-lysyl-[protein]. The enzyme catalyses N(6)-propanoyl-L-lysyl-[protein] + NAD(+) + H2O = 3''-O-propanoyl-ADP-D-ribose + nicotinamide + L-lysyl-[protein]. It catalyses the reaction N(6)-(2E)-butenoyl-L-lysyl-[protein] + NAD(+) + H2O = 2''-O-(2E)-but-2-enoyl-ADP-D-ribose + nicotinamide + L-lysyl-[protein]. It carries out the reaction N(6)-[(S)-lactoyl]-L-lysyl-[protein] + NAD(+) + H2O = 2''-O-(S)-lactoyl-ADP-D-ribose + nicotinamide + L-lysyl-[protein]. Inhibited by nicotinamide. Activated by resveratrol (3,5,4'-trihydroxy-trans-stilbene), butein (3,4,2',4'-tetrahydroxychalcone), piceatannol (3,5,3',4'-tetrahydroxy-trans-stilbene), Isoliquiritigenin (4,2',4'-trihydroxychalcone), fisetin (3,7,3',4'-tetrahydroxyflavone) and quercetin (3,5,7,3',4'-pentahydroxyflavone). MAPK8/JNK1 and RPS19BP1/AROS act as positive regulators of deacetylation activity. Negatively regulated by CCAR2. Functionally, NAD-dependent protein deacetylase that links transcriptional regulation directly to intracellular energetics and participates in the coordination of several separated cellular functions such as cell cycle, response to DNA damage, metabolism, apoptosis and autophagy. Can modulate chromatin function through deacetylation of histones and can promote alterations in the methylation of histones and DNA, leading to transcriptional repression. Deacetylates a broad range of transcription factors and coregulators, thereby regulating target gene expression positively and negatively. Serves as a sensor of the cytosolic ratio of NAD(+)/NADH which is altered by glucose deprivation and metabolic changes associated with caloric restriction. Is essential in skeletal muscle cell differentiation and in response to low nutrients mediates the inhibitory effect on skeletal myoblast differentiation which also involves 5'-AMP-activated protein kinase (AMPK) and nicotinamide phosphoribosyltransferase (NAMPT). Component of the eNoSC (energy-dependent nucleolar silencing) complex, a complex that mediates silencing of rDNA in response to intracellular energy status and acts by recruiting histone-modifying enzymes. The eNoSC complex is able to sense the energy status of cell: upon glucose starvation, elevation of NAD(+)/NADP(+) ratio activates SIRT1, leading to histone H3 deacetylation followed by dimethylation of H3 at 'Lys-9' (H3K9me2) by SUV39H1 and the formation of silent chromatin in the rDNA locus. Deacetylates 'Lys-266' of SUV39H1, leading to its activation. Inhibits skeletal muscle differentiation by deacetylating PCAF and MYOD1. Deacetylates H2A and 'Lys-26' of H1-4. Deacetylates 'Lys-16' of histone H4 (in vitro). Involved in NR0B2/SHP corepression function through chromatin remodeling: Recruited to LRH1 target gene promoters by NR0B2/SHP thereby stimulating histone H3 and H4 deacetylation leading to transcriptional repression. Proposed to contribute to genomic integrity via positive regulation of telomere length; however, reports on localization to pericentromeric heterochromatin are conflicting. Proposed to play a role in constitutive heterochromatin (CH) formation and/or maintenance through regulation of the available pool of nuclear SUV39H1. Upon oxidative/metabolic stress decreases SUV39H1 degradation by inhibiting SUV39H1 polyubiquitination by MDM2. This increase in SUV39H1 levels enhances SUV39H1 turnover in CH, which in turn seems to accelerate renewal of the heterochromatin which correlates with greater genomic integrity during stress response. Deacetylates 'Lys-382' of p53/TP53 and impairs its ability to induce transcription-dependent proapoptotic program and modulate cell senescence. Deacetylates TAF1B and thereby represses rDNA transcription by the RNA polymerase I. Deacetylates MYC, promotes the association of MYC with MAX and decreases MYC stability leading to compromised transformational capability. Deacetylates FOXO3 in response to oxidative stress thereby increasing its ability to induce cell cycle arrest and resistance to oxidative stress but inhibiting FOXO3-mediated induction of apoptosis transcriptional activity; also leading to FOXO3 ubiquitination and protesomal degradation. Appears to have a similar effect on MLLT7/FOXO4 in regulation of transcriptional activity and apoptosis. Deacetylates DNMT1; thereby impairs DNMT1 methyltransferase-independent transcription repressor activity, modulates DNMT1 cell cycle regulatory function and DNMT1-mediated gene silencing. Deacetylates RELA/NF-kappa-B p65 thereby inhibiting its transactivating potential and augments apoptosis in response to TNF-alpha. Deacetylates HIF1A, KAT5/TIP60, RB1 and HIC1. Deacetylates FOXO1 resulting in its nuclear retention and enhancement of its transcriptional activity leading to increased gluconeogenesis in liver. Inhibits E2F1 transcriptional activity and apoptotic function, possibly by deacetylation. Involved in HES1- and HEY2-mediated transcriptional repression. In cooperation with MYCN seems to be involved in transcriptional repression of DUSP6/MAPK3 leading to MYCN stabilization by phosphorylation at 'Ser-62'. Deacetylates MEF2D. Required for antagonist-mediated transcription suppression of AR-dependent genes which may be linked to local deacetylation of histone H3. Represses HNF1A-mediated transcription. Required for the repression of ESRRG by CREBZF. Deacetylates NR1H3 and NR1H2 and deacetylation of NR1H3 at 'Lys-434' positively regulates transcription of NR1H3:RXR target genes, promotes NR1H3 proteasomal degradation and results in cholesterol efflux; a promoter clearing mechanism after reach round of transcription is proposed. Involved in lipid metabolism: deacetylates LPIN1, thereby inhibiting diacylglycerol synthesis. Implicated in regulation of adipogenesis and fat mobilization in white adipocytes by repression of PPARG which probably involves association with NCOR1 and SMRT/NCOR2. Deacetylates p300/EP300 and PRMT1. Deacetylates ACSS2 leading to its activation, and HMGCS1 deacetylation. Involved in liver and muscle metabolism. Through deacetylation and activation of PPARGC1A is required to activate fatty acid oxidation in skeletal muscle under low-glucose conditions and is involved in glucose homeostasis. Involved in regulation of PPARA and fatty acid beta-oxidation in liver. Involved in positive regulation of insulin secretion in pancreatic beta cells in response to glucose; the function seems to imply transcriptional repression of UCP2. Proposed to deacetylate IRS2 thereby facilitating its insulin-induced tyrosine phosphorylation. Deacetylates SREBF1 isoform SREBP-1C thereby decreasing its stability and transactivation in lipogenic gene expression. Involved in DNA damage response by repressing genes which are involved in DNA repair, such as XPC and TP73, deacetylating XRCC6/Ku70, and facilitating recruitment of additional factors to sites of damaged DNA, such as SIRT1-deacetylated NBN can recruit ATM to initiate DNA repair and SIRT1-deacetylated XPA interacts with RPA2. Also involved in DNA repair of DNA double-strand breaks by homologous recombination and specifically single-strand annealing independently of XRCC6/Ku70 and NBN. Promotes DNA double-strand breaks by mediating deacetylation of SIRT6. Transcriptional suppression of XPC probably involves an E2F4:RBL2 suppressor complex and protein kinase B (AKT) signaling. Transcriptional suppression of TP73 probably involves E2F4 and PCAF. Deacetylates WRN thereby regulating its helicase and exonuclease activities and regulates WRN nuclear translocation in response to DNA damage. Deacetylates APEX1 at 'Lys-6' and 'Lys-7' and stimulates cellular AP endonuclease activity by promoting the association of APEX1 to XRCC1. Catalyzes deacetylation of ERCC4/XPF, thereby impairing interaction with ERCC1 and nucleotide excision repair (NER). Increases p53/TP53-mediated transcription-independent apoptosis by blocking nuclear translocation of cytoplasmic p53/TP53 and probably redirecting it to mitochondria. Deacetylates XRCC6/Ku70 at 'Lys-539' and 'Lys-542' causing it to sequester BAX away from mitochondria thereby inhibiting stress-induced apoptosis. Is involved in autophagy, presumably by deacetylating ATG5, ATG7 and MAP1LC3B/ATG8. Deacetylates AKT1 which leads to enhanced binding of AKT1 and PDK1 to PIP3 and promotes their activation. Proposed to play role in regulation of STK11/LBK1-dependent AMPK signaling pathways implicated in cellular senescence which seems to involve the regulation of the acetylation status of STK11/LBK1. Can deacetylate STK11/LBK1 and thereby increase its activity, cytoplasmic localization and association with STRAD; however, the relevance of such activity in normal cells is unclear. In endothelial cells is shown to inhibit STK11/LBK1 activity and to promote its degradation. Deacetylates SMAD7 at 'Lys-64' and 'Lys-70' thereby promoting its degradation. Deacetylates CIITA and augments its MHC class II transactivation and contributes to its stability. Deacetylates MECOM/EVI1. Deacetylates PML at 'Lys-487' and this deacetylation promotes PML control of PER2 nuclear localization. During the neurogenic transition, represses selective NOTCH1-target genes through histone deacetylation in a BCL6-dependent manner and leading to neuronal differentiation. Regulates the circadian expression of several core clock genes, including BMAL1, RORC, PER2 and CRY1 and plays a critical role in maintaining a controlled rhythmicity in histone acetylation, thereby contributing to circadian chromatin remodeling. Deacetylates BMAL1 and histones at the circadian gene promoters in order to facilitate repression by inhibitory components of the circadian oscillator. Deacetylates PER2, facilitating its ubiquitination and degradation by the proteasome. Protects cardiomyocytes against palmitate-induced apoptosis. Deacetylates XBP1 isoform 2; deacetylation decreases protein stability of XBP1 isoform 2 and inhibits its transcriptional activity. Deacetylates PCK1 and directs its activity toward phosphoenolpyruvate production promoting gluconeogenesis. Involved in the CCAR2-mediated regulation of PCK1 and NR1D1. Deacetylates CTNB1 at 'Lys-49'. In POMC (pro-opiomelanocortin) neurons, required for leptin-induced activation of PI3K signaling. Deacetylates SOX9; promoting SOX9 nuclear localization and transactivation activity. Involved in the regulation of centrosome duplication: deacetylates CENATAC in G1 phase, allowing for SASS6 accumulation on the centrosome and subsequent procentriole assembly. Deacetylates NDC80/HEC1. In addition to protein deacetylase activity, also acts as a protein-lysine deacylase by mediating protein delactylation, depropionylation and decrotonylation. Mediates depropionylation of Osterix (SP7). Catalyzes decrotonylation of histones; it however does not represent a major histone decrotonylase. Mediates protein delactylation of TEAD1 and YAP1. Deacetylates 'Lys-382' of p53/TP53, however with lower activity than isoform 1. In combination, the two isoforms exert an additive effect. Isoform 2 regulates p53/TP53 expression and cellular stress response and is in turn repressed by p53/TP53 presenting a SIRT1 isoform-dependent auto-regulatory loop. In terms of biological role, catalytically inactive 75SirT1 may be involved in regulation of apoptosis. May be involved in protecting chondrocytes from apoptotic death by associating with cytochrome C and interfering with apoptosome assembly. Its function is as follows. (Microbial infection) In case of HIV-1 infection, interacts with and deacetylates the viral Tat protein. The viral Tat protein inhibits SIRT1 deacetylation activity toward RELA/NF-kappa-B p65, thereby potentiates its transcriptional activity and SIRT1 is proposed to contribute to T-cell hyperactivation during infection. In Homo sapiens (Human), this protein is NAD-dependent protein deacetylase sirtuin-1.